The primary structure comprises 109 residues: MAQFEWVHAAWLALAIVLEIVANVFLKFSDGFRRKIFGLLSQAAVLAAFSALSQAVKGIDLSVAYALWGGFGIAATLAAGWILFGQRLNRKGWIGLVLLLAGMIMVKLT.

4 helical membrane-spanning segments follow: residues 6-26, 36-56, 64-84, and 88-108; these read WVHAAWLALAIVLEIVANVFL, IFGLLSQAAVLAAFSALSQAV, AYALWGGFGIAATLAAGWILF, and LNRKGWIGLVLLLAGMIMVKL.

It belongs to the drug/metabolite transporter (DMT) superfamily. Small multidrug resistance (SMR) (TC 2.A.7.1) family. MdtI subfamily. In terms of assembly, forms a complex with MdtJ.

It localises to the cell inner membrane. Its function is as follows. Catalyzes the excretion of spermidine. This Shigella dysenteriae serotype 1 (strain Sd197) protein is Spermidine export protein MdtI.